The following is a 784-amino-acid chain: Lon protease (784 aa).

The region spanning 6-207 (LPLMALRDMV…TVITTLTSNI (202 aa)) is the Lon N-terminal domain. 356 to 363 (GPPGVGKT) is a binding site for ATP. Residues 592-773 (EDQIGSTTGL…DQVLKHALVE (182 aa)) enclose the Lon proteolytic domain. Active-site residues include Ser-679 and Lys-722.

Belongs to the peptidase S16 family. In terms of assembly, homohexamer. Organized in a ring with a central cavity.

It is found in the cytoplasm. It carries out the reaction Hydrolysis of proteins in presence of ATP.. ATP-dependent serine protease that mediates the selective degradation of mutant and abnormal proteins as well as certain short-lived regulatory proteins. Required for cellular homeostasis and for survival from DNA damage and developmental changes induced by stress. Degrades polypeptides processively to yield small peptide fragments that are 5 to 10 amino acids long. Binds to DNA in a double-stranded, site-specific manner. This chain is Lon protease, found in Rickettsia prowazekii (strain Madrid E).